The primary structure comprises 696 residues: MKFLQQNSFTQTSMSQPHEDVSPPLRHPYLTGNFAPIHKTTNLTPCTYSGCIPPELTGGQYVRNGGNPVSHQDLGKDAHWFDGDGMLSGVAFRKASIDGKTIPEFVNQYILTDLYLSRKTTSIASPIMPSITTLVNPLSTMFQIMFATFRTIFLVILSNLPGSQQAIKRISVANTAVLYHDGRALATCESGPPMRIQLPSLDTVGWFDGVEAEGEPEISQAGSDDSPFGGSGIFSFMKEWTTGHPKVDPVTGEMLLYHNTFMPPYVHCSVLPKSNEKAPGHRLVNQPVLGVSGARMMHDFGASRSHTIIMDLPLSLDPLNTMKGKEVVAYDPTKPSRFGVFPRHLPSSVRWFHTAPCCIFHTANTWDSQSSEGELSVNLLACRMTSSTLVYTAGNIRPPVRSRCTQARVWSDEREETACRYKEAPALESPGESTGLADYFPITAESDDYDQCRLYYYEFDLAMESRNHVKSQWALSAIPFEFPSVRPDREMQEARYIYGCSTSTSCFGVALGRADKVDLLVKMDAKTLIQRGKKMNATSITGCVDRRSVCEILQEQRKDDPINIFRLPPNHYAQEPRFVPRACSTEEDDGYLLFYVFDESQLLPSGDCPPSATSELWILDAKNMRDVVAKVRLPQRVPYGLHGTWFSSQDIESQRSVESLRSLEVVQRKKEEWVNSGGQIRKSWMVLREKLEKAVG.

A compositionally biased stretch (polar residues) spans 1–16 (MKFLQQNSFTQTSMSQ). Residues 1-27 (MKFLQQNSFTQTSMSQPHEDVSPPLRH) are disordered. The Fe(2+) site is built by H244, H298, H361, and H642.

The protein belongs to the carotenoid oxygenase family. Fe(2+) is required as a cofactor.

It carries out the reaction all-trans-beta-carotene + O2 = 2 all-trans-retinal. Its pathway is carotenoid biosynthesis. Its function is as follows. Carotenoid dioxygenase; part of the car gene cluster that mediates the biosynthesis of neurosporaxanthin, a carboxylic apocarotenoid acting as an essential protective pigments and leading to orange pigmentation. CarX mediates the cleavage of beta-carotene produced by carAR into retinal, the rhodopsin's chromophore that is involved in the regulation of the carotenoid biosynthetic pathway via a negative feedback mechanism. It can also convert the synthetic compound beta-apo-8'-carotenal but not C35-apocarotenoids such as the acidic apocarotenoid neurosporaxanthin (C35), as well as its corresponding aldehyde beta-apo-4'-carotenal. The protein is Carotenoid dioxygenase carX of Gibberella fujikuroi (strain CBS 195.34 / IMI 58289 / NRRL A-6831) (Bakanae and foot rot disease fungus).